The following is a 258-amino-acid chain: Apolipoprotein A-I (258 aa).

An N-terminal signal peptide occupies residues 1–18 (MKFLVLALTILLAAGTQA). The 3 X approximate tandem repeats stretch occupies residues 32–63 (VKAALNMYIAQVKLTAQRSIDLLDDTEYKEYK). 2 tandem repeats follow at residues 64–85 (MQLS…KSWP) and 86–106 (PTPR…AEVM). The segment at 64-258 (MQLSQSLDNL…WLSTRPSARP (195 aa)) is 10 X approximate tandem repeats. The 3; half-length repeat unit spans residues 107-117 (KDVEDVRTQLE). Tandem repeats lie at residues 118–139 (PKRA…KKLE), 140–161 (PLIK…AKID), 162–183 (PVVE…TKLM), 184–205 (PIVE…TLAA), 206–227 (PYAE…EKVA), 228–238 (PLSEDFKARWA), and 239–258 (PPPR…SARP). The disordered stretch occupies residues 233-258 (FKARWAPPPRRPSKSSWLSTRPSARP). Residues 246–258 (KSSWLSTRPSARP) show a composition bias toward polar residues.

This sequence belongs to the apolipoprotein A1/A4/E family. As to expression, major protein of plasma HDL, also found in chylomicrons. Expressed in liver, intestine and muscle.

It is found in the secreted. Its function is as follows. Participates in the reverse transport of cholesterol from tissues to the liver for excretion by promoting cholesterol efflux from tissues and by acting as a cofactor for the lecithin cholesterol acyltransferase (LCAT). The protein is Apolipoprotein A-I (apoa1) of Salmo salar (Atlantic salmon).